A 359-amino-acid chain; its full sequence is MILNSSTEDGIKRIQDDCPKAGRHNYIFVMIPTLYSIIFVVGIFGNSLVVIVIYFYMKLKTVASVFLLNLALADLCFLLTLPLWAVYTAMEYRWPFGNYLCKIASASVSFNLYASVFLLTCLSIDRYLAIVHPMKSRLRRTMLVAKVTCIIIWLLAGLASLPAIIHRNVFFIENTNITVCAFHYESQNSTLPIGLGLTKNILGFLFPFLIILTSYTLIWKALKKAYEIQKNKPRNDDIFKIIMAIVLFFFFSWIPHQIFTFLDVLIQLGIIRDCRIADIVDTAMPITICIAYFNNCLNPLFYGFLGKKFKRYFLQLLKYIPPKAKSHSNLSTKMSTLSYRPSDNVSSSTKKPAPCFEVE.

Residues 1-25 (MILNSSTEDGIKRIQDDCPKAGRHN) are Extracellular-facing. N-linked (GlcNAc...) (complex) asparagine glycosylation occurs at N4. Angiotensin II contacts are provided by Q15 and D17. Intrachain disulfides connect C18–C274 and C101–C180. The helical transmembrane segment at 26 to 55 (YIFVMIPTLYSIIFVVGIFGNSLVVIVIYF) threads the bilayer. Topologically, residues 56–61 (YMKLKT) are cytoplasmic. Residues 62 to 89 (VASVFLLNLALADLCFLLTLPLWAVYTA) traverse the membrane as a helical segment. Topologically, residues 90–98 (MEYRWPFGN) are extracellular. Residues 99-125 (YLCKIASASVSFNLYASVFLLTCLSID) form a helical membrane-spanning segment. The Cytoplasmic segment spans residues 126-141 (RYLAIVHPMKSRLRRT). Residues 142 to 165 (MLVAKVTCIIIWLLAGLASLPAII) traverse the membrane as a helical segment. Residues 166 to 190 (HRNVFFIENTNITVCAFHYESQNST) lie on the Extracellular side of the membrane. An angiotensin II-binding site is contributed by R167. N-linked (GlcNAc...) asparagine glycosylation occurs at N176. The angiotensin II site is built by F182, H183, and Y184. Residue N188 is glycosylated (N-linked (GlcNAc...) asparagine). The helical transmembrane segment at 191–216 (LPIGLGLTKNILGFLFPFLIILTSYT) threads the bilayer. K199 is an angiotensin II binding site. The Cytoplasmic segment spans residues 217 to 239 (LIWKALKKAYEIQKNKPRNDDIF). A helical membrane pass occupies residues 240–268 (KIIMAIVLFFFFSWIPHQIFTFLDVLIQL). Residues 269–278 (GIIRDCRIAD) are Extracellular-facing. The chain crosses the membrane as a helical span at residues 279-304 (IVDTAMPITICIAYFNNCLNPLFYGF). The Cytoplasmic portion of the chain corresponds to 305–359 (LGKKFKRYFLQLLKYIPPKAKSHSNLSTKMSTLSYRPSDNVSSSTKKPAPCFEVE). Polar residues predominate over residues 335–350 (STLSYRPSDNVSSSTK). A disordered region spans residues 335–359 (STLSYRPSDNVSSSTKKPAPCFEVE). C355 is lipidated: S-palmitoyl cysteine.

It belongs to the G-protein coupled receptor 1 family. As to quaternary structure, interacts with MAS1. Interacts with ARRB1. Interacts with FLNA (via filamin repeat 21); increases PKA-mediated phosphorylation of FLNA. In terms of processing, C-terminal Ser or Thr residues may be phosphorylated. Liver, lung, adrenal and adrenocortical adenomas.

It is found in the cell membrane. Strongly inhibited by anti-hypertensive drugs losartan, candesartan, valsartan, irbesartan, telmisartan, eprosartan, olmesartan and azilsartan, most of which share a common biphenyl-tetrazole scaffold. Receptor for angiotensin II, a vasoconstricting peptide, which acts as a key regulator of blood pressure and sodium retention by the kidney. The activated receptor in turn couples to G-alpha proteins G(q) (GNAQ, GNA11, GNA14 or GNA15) and thus activates phospholipase C and increases the cytosolic Ca(2+) concentrations, which in turn triggers cellular responses such as stimulation of protein kinase C. Its function is as follows. (Microbial infection) During SARS coronavirus-2/SARS-CoV-2 infection, it is able to recognize and internalize the complex formed by secreted ACE2 and SARS-CoV-2 spike protein through DNM2/dynamin 2-dependent endocytosis. The polypeptide is Type-1 angiotensin II receptor (Homo sapiens (Human)).